The following is a 203-amino-acid chain: Holliday junction branch migration complex subunit RuvA (203 aa).

The interval 1-63 is domain I; it reads MIGKLSGRVD…EDHINLYGFL (63 aa). Residues 64-142 form a domain II region; that stretch reads SLEEKSFFNL…KISSSSAAIK (79 aa). Residues 143–149 are flexible linker; the sequence is DSLNIKG. The tract at residues 150-203 is domain III; the sequence is ITPVASSEVIKALINMGFSRFEAQNAVQEIITKNPEISIDELIRTALKNRNSNF.

Belongs to the RuvA family. In terms of assembly, homotetramer. Forms an RuvA(8)-RuvB(12)-Holliday junction (HJ) complex. HJ DNA is sandwiched between 2 RuvA tetramers; dsDNA enters through RuvA and exits via RuvB. An RuvB hexamer assembles on each DNA strand where it exits the tetramer. Each RuvB hexamer is contacted by two RuvA subunits (via domain III) on 2 adjacent RuvB subunits; this complex drives branch migration. In the full resolvosome a probable DNA-RuvA(4)-RuvB(12)-RuvC(2) complex forms which resolves the HJ.

Its subcellular location is the cytoplasm. Its function is as follows. The RuvA-RuvB-RuvC complex processes Holliday junction (HJ) DNA during genetic recombination and DNA repair, while the RuvA-RuvB complex plays an important role in the rescue of blocked DNA replication forks via replication fork reversal (RFR). RuvA specifically binds to HJ cruciform DNA, conferring on it an open structure. The RuvB hexamer acts as an ATP-dependent pump, pulling dsDNA into and through the RuvAB complex. HJ branch migration allows RuvC to scan DNA until it finds its consensus sequence, where it cleaves and resolves the cruciform DNA. This chain is Holliday junction branch migration complex subunit RuvA, found in Rickettsia bellii (strain OSU 85-389).